A 305-amino-acid chain; its full sequence is Homoserine O-acetyltransferase (305 aa).

Cysteine 142 serves as the catalytic Acyl-thioester intermediate. Substrate contacts are provided by lysine 163 and serine 192. The active-site Proton acceptor is the histidine 233. Glutamate 235 is a catalytic residue. Position 247 (arginine 247) interacts with substrate.

It belongs to the MetA family.

The protein resides in the cytoplasm. The enzyme catalyses L-homoserine + acetyl-CoA = O-acetyl-L-homoserine + CoA. The protein operates within amino-acid biosynthesis; L-methionine biosynthesis via de novo pathway; O-acetyl-L-homoserine from L-homoserine: step 1/1. Functionally, transfers an acetyl group from acetyl-CoA to L-homoserine, forming acetyl-L-homoserine. This is Homoserine O-acetyltransferase from Methanomassiliicoccus intestinalis (strain Issoire-Mx1).